Reading from the N-terminus, the 236-residue chain is MAKRYWNINLEEMMEAGVHFGHGTRKWNPRMAPYISAKRKGIHITNLTRTARFLSEACDLVFDAASRGKQFLIVGTKNKAADSVARAAIRARCHYVNKKWLGGMLTNWSTTETRLHKFRDLRTEQKTGRLNRLPKRDAAVLKRQLSHLQTYLGGIKYMTGLPDIVIIIDQQEEYTALRECITLGIPTISLIDTNCDPDLADISIPANDDAIASIRLILNKLVFAICEGHSSYIQNS.

It belongs to the universal ribosomal protein uS2 family.

The protein resides in the plastid. It localises to the chloroplast. The sequence is that of Small ribosomal subunit protein uS2c (rps2) from Carica papaya (Papaya).